Here is a 615-residue protein sequence, read N- to C-terminus: Probable inactive purple acid phosphatase 24 (615 aa).

The N-terminal stretch at 1-26 is a signal peptide; the sequence is MARVLGVLLCLLALFSSSLCLDHANG. 3 N-linked (GlcNAc...) asparagine glycosylation sites follow: asparagine 129, asparagine 267, and asparagine 275. Position 297 (aspartate 297) interacts with Fe cation. The N-linked (GlcNAc...) asparagine glycan is linked to asparagine 318. Fe cation contacts are provided by aspartate 338 and tyrosine 341. Aspartate 338 serves as a coordination point for Zn(2+). Asparagine 371, histidine 460, and histidine 502 together coordinate Zn(2+). Asparagine 371 contributes to the substrate binding site. 502 to 504 contributes to the substrate binding site; the sequence is HVH. Histidine 504 provides a ligand contact to Fe cation. An N-linked (GlcNAc...) asparagine glycan is attached at asparagine 592.

Belongs to the metallophosphoesterase superfamily. Purple acid phosphatase family. In terms of assembly, homodimer. Requires Fe cation as cofactor. Zn(2+) is required as a cofactor. As to expression, specifically expressed in flowers.

It is found in the secreted. In Arabidopsis thaliana (Mouse-ear cress), this protein is Probable inactive purple acid phosphatase 24 (PAP24).